We begin with the raw amino-acid sequence, 396 residues long: MLSEVLLVSAPGKVILHGEHAVVHGKVALAVSLNLRTFLRLQPHSNGKVDLSLPNIGIKRAWDVARLQSLDTSFLEQGDVTTPTSEQVEKLKEVAGLPDDCAVTERLAVLAFLYLYLSICRKQRALPSLDIVVWSELPPGAGLGSSAAYSVCLAAALLTVCEEIPNPLKDGDCVNRWTKEDLELINKWAFQGERMIHGNPSGVDNAVSTWGGALRYHQGKISSLKRSPALQILLTNTKVPRNTRALVAGVRNRLLKFPEIVAPLLTSIDAISLECERVLGEMGEAPAPEQYLVLEELIDMNQHHLNALGVGHASLDQLCQVTRARGLHSKLTGAGGGGCGITLLKPGLEQPEVEATKQALTSCGFDCLETSIGAPGVSIHSATSLDSRVQQALDGL.

Residues K13, N55, S135, and 140–146 (GAGLGSS) each bind ATP. S146 acts as the Proton donor in catalysis. Mg(2+) contacts are provided by S146 and E193. D204 acts as the Proton acceptor in catalysis.

The protein belongs to the GHMP kinase family. Mevalonate kinase subfamily. In terms of assembly, homodimer. Requires Mg(2+) as cofactor.

It localises to the cytoplasm. The protein resides in the peroxisome. It catalyses the reaction (R)-mevalonate + ATP = (R)-5-phosphomevalonate + ADP + H(+). It participates in isoprenoid biosynthesis; isopentenyl diphosphate biosynthesis via mevalonate pathway; isopentenyl diphosphate from (R)-mevalonate: step 1/3. Its activity is regulated as follows. Farnesyl pyrophosphate and geranyl pyrophosphate inhibit mevalonate kinase activity by binding competitively at the ATP-binding sites. Its function is as follows. Catalyzes the phosphorylation of mevalonate to mevalonate 5-phosphate, a key step in isoprenoid and cholesterol biosynthesis. This chain is Mevalonate kinase, found in Homo sapiens (Human).